A 442-amino-acid polypeptide reads, in one-letter code: Testican-1 (442 aa).

A signal peptide spans 1 to 21 (MPAIAVLAAAAAAWCFLQVDS). Cystine bridges form between Cys89–Cys100, Cys94–Cys110, Cys139–Cys169, Cys142–Cys162, Cys151–Cys183, Cys316–Cys340, Cys351–Cys358, and Cys360–Cys379. A Kazal-like domain is found at 133–185 (PSNLVKCKPCPVAQSAMVCGSDGHTYTSKCKLEFHACSTGKSLNSLCDGPCPC). Residues 313-379 (GLPCQNEMNR…GSRKQGTVSC (67 aa)) form the Thyroglobulin type-1 domain. Disordered stretches follow at residues 375-395 (GTVSCEEEQETSGDFGSGGSV) and 420-442 (TRAVREDDEDEDDDKEDEVGYIW). 2 O-linked (Xyl...) (glycosaminoglycan) serine glycosylation sites follow: Ser386 and Ser391. Over residues 425-442 (EDDEDEDDDKEDEVGYIW) the composition is skewed to acidic residues.

Contains chondroitin sulfate and heparan sulfate O-linked oligosaccharides. Predominantly expressed in the postsynaptic area of pyramidal neurons.

It is found in the secreted. The protein resides in the extracellular space. The protein localises to the extracellular matrix. May play a role in cell-cell and cell-matrix interactions. May contribute to various neuronal mechanisms in the central nervous system. In Mus musculus (Mouse), this protein is Testican-1 (Spock1).